Reading from the N-terminus, the 478-residue chain is uncharacterized protein (478 aa).

Residues 1 to 19 (MKLFPLCLSALVMSTATCA) form the signal peptide. The Lumenal portion of the chain corresponds to 20 to 214 (SSVEGAIEKV…VPVTLKLQRQ (195 aa)). Residues 215-235 (IFLSFSIVYGLISLWWAIRCI) traverse the membrane as a helical segment. Topologically, residues 236–240 (CSRTK) are cytoplasmic. The helical transmembrane segment at 241–261 (LHLVQVCLFCWFSFFILNHPV) threads the bilayer. Topologically, residues 262–289 (KQRIFSIDNPDEYLVPFVVSCFTYFLGD) are lumenal. A helical membrane pass occupies residues 290–310 (GIEYALYSLFITTTVLGFGTI). Topologically, residues 311–317 (RRTSKKM) are cytoplasmic. Residues 318 to 338 (VLFFSLLTCGQAFLVNVAPMV) form a helical membrane-spanning segment. The Lumenal segment spans residues 339 to 356 (YPLLYISGSDKACVLRMV). The chain crosses the membrane as a helical span at residues 357–377 (WVFNKFLYLPLITFLGAVLAF). Topologically, residues 378–391 (RFRLKKASQFDTRW) are cytoplasmic. The chain crosses the membrane as a helical span at residues 392–412 (NLFALTLAIIILFAFNDLVIF). Residues 413 to 427 (DKLQKLWKYDDTTLE) lie on the Lumenal side of the membrane. A helical transmembrane segment spans residues 428 to 448 (YLKIVNGGIKFVAFSILLGPY). The Cytoplasmic portion of the chain corresponds to 449–478 (SKLFAEPKSLQLDDFLGKHDGHKDPSLEKF).

It localises to the endoplasmic reticulum membrane. The protein resides in the golgi apparatus membrane. This is an uncharacterized protein from Schizosaccharomyces pombe (strain 972 / ATCC 24843) (Fission yeast).